The chain runs to 186 residues: Large ribosomal subunit protein uL5 (186 aa).

It belongs to the universal ribosomal protein uL5 family. As to quaternary structure, part of the 50S ribosomal subunit; part of the 5S rRNA/L5/L18/L25 subcomplex. Contacts the 5S rRNA and the P site tRNA. Forms a bridge to the 30S subunit in the 70S ribosome.

In terms of biological role, this is one of the proteins that bind and probably mediate the attachment of the 5S RNA into the large ribosomal subunit, where it forms part of the central protuberance. In the 70S ribosome it contacts protein S13 of the 30S subunit (bridge B1b), connecting the 2 subunits; this bridge is implicated in subunit movement. Contacts the P site tRNA; the 5S rRNA and some of its associated proteins might help stabilize positioning of ribosome-bound tRNAs. The protein is Large ribosomal subunit protein uL5 of Karelsulcia muelleri (strain GWSS) (Sulcia muelleri).